The primary structure comprises 396 residues: Elongation factor Tu 1 (396 aa).

Residues Lys10–Glu206 form the tr-type G domain. Residues Gly19 to Thr26 form a G1 region. Gly19–Thr26 provides a ligand contact to GTP. Thr26 provides a ligand contact to Mg(2+). The tract at residues Gly60–Asn64 is G2. The interval Asp81–Gly84 is G3. GTP is bound by residues Asp81–His85 and Asn136–Asp139. Positions Asn136–Asp139 are G4. The segment at Ser174–Leu176 is G5.

This sequence belongs to the TRAFAC class translation factor GTPase superfamily. Classic translation factor GTPase family. EF-Tu/EF-1A subfamily. In terms of assembly, monomer.

It is found in the cytoplasm. The enzyme catalyses GTP + H2O = GDP + phosphate + H(+). Its function is as follows. GTP hydrolase that promotes the GTP-dependent binding of aminoacyl-tRNA to the A-site of ribosomes during protein biosynthesis. In Hyphomonas neptunium (strain ATCC 15444), this protein is Elongation factor Tu 1.